The sequence spans 196 residues: Carnitine operon protein CaiE (196 aa).

Residues 174-196 form a disordered region; the sequence is QPLRQMEENRPRLQGTTDVTPKR. Positions 187–196 are enriched in polar residues; it reads QGTTDVTPKR.

This sequence belongs to the transferase hexapeptide repeat family.

Its pathway is amine and polyamine metabolism; carnitine metabolism. In terms of biological role, overproduction of CaiE stimulates the activity of CaiB and CaiD. In Escherichia coli (strain K12), this protein is Carnitine operon protein CaiE (caiE).